A 208-amino-acid chain; its full sequence is MGVADAPSPGNVPVLGDMKNRSAAEMKISVLALRALTLVLLVIALALMVSNKQTQSIPIKLPGMASTIFLKKTATFSQITGVQYYVGALSVAVAYMFFQMLAGLFTILTTGSIVGSKSRAWVTFILDQLIAYLMVSAATVVAEVGYIARRGETKVGWNQVCSDFKHYCFIYGFSLVNAFLATIAFLPVVAVSAFHLFRMYGAQSAQSK.

Topologically, residues 1 to 27 are cytoplasmic; it reads MGVADAPSPGNVPVLGDMKNRSAAEMK. A helical transmembrane segment spans residues 28–48; the sequence is ISVLALRALTLVLLVIALALM. The Extracellular portion of the chain corresponds to 49–87; the sequence is VSNKQTQSIPIKLPGMASTIFLKKTATFSQITGVQYYVG. A helical membrane pass occupies residues 88 to 108; the sequence is ALSVAVAYMFFQMLAGLFTIL. The Cytoplasmic segment spans residues 109–120; that stretch reads TTGSIVGSKSRA. Residues 121–141 traverse the membrane as a helical segment; that stretch reads WVTFILDQLIAYLMVSAATVV. At 142–168 the chain is on the extracellular side; it reads AEVGYIARRGETKVGWNQVCSDFKHYC. The chain crosses the membrane as a helical span at residues 169–189; that stretch reads FIYGFSLVNAFLATIAFLPVV. Residues 190 to 208 are Cytoplasmic-facing; it reads AVSAFHLFRMYGAQSAQSK.

This sequence belongs to the Casparian strip membrane proteins (CASP) family. In terms of assembly, homodimer and heterodimers.

The protein resides in the cell membrane. The polypeptide is CASP-like protein 2U9 (Selaginella moellendorffii (Spikemoss)).